Here is a 215-residue protein sequence, read N- to C-terminus: Ribosomal RNA small subunit methyltransferase G (215 aa).

S-adenosyl-L-methionine-binding positions include G78, L83, 128-129 (AE), and R146.

This sequence belongs to the methyltransferase superfamily. RNA methyltransferase RsmG family.

The protein resides in the cytoplasm. The catalysed reaction is guanosine(527) in 16S rRNA + S-adenosyl-L-methionine = N(7)-methylguanosine(527) in 16S rRNA + S-adenosyl-L-homocysteine. Specifically methylates the N7 position of guanine in position 527 of 16S rRNA. The protein is Ribosomal RNA small subunit methyltransferase G of Anaeromyxobacter dehalogenans (strain 2CP-C).